Consider the following 146-residue polypeptide: Large ribosomal subunit protein uL13 (146 aa).

The protein belongs to the universal ribosomal protein uL13 family. In terms of assembly, part of the 50S ribosomal subunit.

Its function is as follows. This protein is one of the early assembly proteins of the 50S ribosomal subunit, although it is not seen to bind rRNA by itself. It is important during the early stages of 50S assembly. The polypeptide is Large ribosomal subunit protein uL13 (Bdellovibrio bacteriovorus (strain ATCC 15356 / DSM 50701 / NCIMB 9529 / HD100)).